Here is a 258-residue protein sequence, read N- to C-terminus: MSILFYVIFLAYLRGIQGNSMDQRSLPEDSLNSLIIKLIQADILKNKLSKQMVDVKENYQSTLPKAEAPREPEQGEATRSEFQPMIATDTELLRQQRRYNSPRVLLSDSTPLEPPPLYLMEDYVGNPVVANRTSPRRKRYAEHKSHRGEYSVCDSESLWVTDKSSAIDIRGHQVTVLGEIKTGNSPVKQYFYETRCKEARPVKNGCRGIDDKHWNSQCKTSQTYVRALTSENNKLVGWRWIRIDTSCVCALSRKIGRT.

The N-terminal stretch at 1-18 (MSILFYVIFLAYLRGIQG) is a signal peptide. The propeptide occupies 19–139 (NSMDQRSLPE…ANRTSPRRKR (121 aa)). Residues 60-85 (QSTLPKAEAPREPEQGEATRSEFQPM) form a disordered region. The span at 67 to 79 (EAPREPEQGEATR) shows a compositional bias: basic and acidic residues. N131 is a glycosylation site (N-linked (GlcNAc...) asparagine). Cystine bridges form between C153-C218, C196-C247, and C206-C249.

It belongs to the NGF-beta family. In terms of tissue distribution, brain and peripheral tissues.

The protein resides in the secreted. In terms of biological role, seems to promote the survival of visceral and proprioceptive sensory neurons. The protein is Neurotrophin-3 (Ntf3) of Mus musculus (Mouse).